The primary structure comprises 336 residues: Fructose-1,6-bisphosphatase class 1 (336 aa).

Mg(2+) contacts are provided by Glu-90, Asp-112, Leu-114, and Asp-115. Residues 115 to 118, Asn-211, and Lys-277 contribute to the substrate site; that span reads DGSS. Glu-283 contributes to the Mg(2+) binding site.

It belongs to the FBPase class 1 family. In terms of assembly, homotetramer. The cofactor is Mg(2+).

The protein resides in the cytoplasm. The catalysed reaction is beta-D-fructose 1,6-bisphosphate + H2O = beta-D-fructose 6-phosphate + phosphate. The protein operates within carbohydrate biosynthesis; gluconeogenesis. The protein is Fructose-1,6-bisphosphatase class 1 of Pseudomonas fluorescens (strain Pf0-1).